The chain runs to 723 residues: Epidermal growth factor receptor kinase substrate 8-like protein 1 (723 aa).

A PTB domain is found at 35–164; it reads QYPVNHLVTF…LHNYRSGRGE (130 aa). Residues 162–183 show a composition bias toward basic and acidic residues; the sequence is RGERRAAALRATQEELQRDRSP. Disordered regions lie at residues 162-247, 442-477, 537-589, and 609-636; these read RGER…PRGP, KQLQHERRRRQQSAPQVAVNGHRDLEPESEPQLESE, GPRL…GLDP, and LAQGRSGPSRAVPGPRAPEPQLSPGSDA. S182 bears the Phosphoserine mark. The residue at position 187 (T187) is a Phosphothreonine. One can recognise an SH3 domain in the interval 478 to 537; the sequence is TAGKWVLCNYDFQARNSSELSVKQRDVLEVLDDSRKWWKVRDPAGQEGYVPYNILTPYPG. Positions 543 to 552 are enriched in polar residues; it reads SQSPARSLNS. Over residues 553–568 the composition is skewed to pro residues; sequence TPPPPPAPAPAPPPAL. Positions 571–580 are enriched in basic and acidic residues; the sequence is PRWDRPRWDS. Residues 689-719 are a coiled coil; sequence VQRSLLEDKEKVSELEAVMEKQKKKVEGEVE.

The protein belongs to the EPS8 family. In terms of assembly, interacts with ABI1. Part of a complex that contains SOS1, ABI1 and EPS8L2. Associates with F-actin. Detected in placenta.

The protein resides in the cytoplasm. Its function is as follows. Stimulates guanine exchange activity of SOS1. May play a role in membrane ruffling and remodeling of the actin cytoskeleton. This is Epidermal growth factor receptor kinase substrate 8-like protein 1 (EPS8L1) from Homo sapiens (Human).